The sequence spans 96 residues: HssA/B-like protein 25 (96 aa).

This sequence belongs to the hssA/B family.

This Dictyostelium discoideum (Social amoeba) protein is HssA/B-like protein 25 (hssl25).